We begin with the raw amino-acid sequence, 236 residues long: LexA repressor (236 aa).

Residues 26 to 46 (FDEMKEALDLASKSGIHRLIT) constitute a DNA-binding region (H-T-H motif). The segment at 84 to 107 (SPSVIEGGQGRSSPAPRPAANNDD) is disordered. Catalysis depends on for autocatalytic cleavage activity residues Ser157 and Lys195.

This sequence belongs to the peptidase S24 family. Homodimer.

It catalyses the reaction Hydrolysis of Ala-|-Gly bond in repressor LexA.. Functionally, represses a number of genes involved in the response to DNA damage (SOS response), including recA and lexA. In the presence of single-stranded DNA, RecA interacts with LexA causing an autocatalytic cleavage which disrupts the DNA-binding part of LexA, leading to derepression of the SOS regulon and eventually DNA repair. This is LexA repressor from Chelativorans sp. (strain BNC1).